Consider the following 442-residue polypeptide: GTPase Der (442 aa).

2 EngA-type G domains span residues 2–167 and 175–351; these read RTIA…PIQN and FKFC…EQAM. Residues 8 to 15, 55 to 59, 119 to 122, 181 to 188, 228 to 232, and 293 to 296 each bind GTP; these read GKPNVGKS, DTGGI, NKVE, GRPNVGKS, DTAGV, and NKWD. The region spanning 352-436 is the KH-like domain; the sequence is RKVATSLLND…PITLYWQDKN (85 aa).

Belongs to the TRAFAC class TrmE-Era-EngA-EngB-Septin-like GTPase superfamily. EngA (Der) GTPase family. Associates with the 50S ribosomal subunit.

GTPase that plays an essential role in the late steps of ribosome biogenesis. This Ureaplasma urealyticum serovar 10 (strain ATCC 33699 / Western) protein is GTPase Der.